Reading from the N-terminus, the 188-residue chain is MDVNIAPLRAWDDFFPGSDRFARPDFRDISKWNNRVVSNLLYYQTNYLVVAAMMISVVGFLSPFNMILGGIVVVLVFTGFVWAAHNKDILRRMKKQYPTAFVMVVMLASYFLISLFGGVMVFVFGITFPLLLMFIHASLRLRNLKNKLENKMEEIGLKRTPMGIVLDALEQQEETITKFSDYISKMKE.

At Met-1 the chain carries N-acetylmethionine. Topologically, residues 1-35 (MDVNIAPLRAWDDFFPGSDRFARPDFRDISKWNNR) are cytoplasmic. 2 helical membrane-spanning segments follow: residues 36-56 (VVSN…MMIS) and 57-77 (VVGF…VLVF). Residues 78–93 (TGFVWAAHNKDILRRM) lie on the Cytoplasmic side of the membrane. 2 helical membrane passes run 94 to 114 (KKQY…FLIS) and 115 to 135 (LFGG…LMFI). The required for homodimer formation and heterodimer formation with ARL6IP1 stretch occupies residues 103-117 (MVVMLASYFLISLFG). Topologically, residues 136–188 (HASLRLRNLKNKLENKMEEIGLKRTPMGIVLDALEQQEETITKFSDYISKMKE) are cytoplasmic. The interval 136–188 (HASLRLRNLKNKLENKMEEIGLKRTPMGIVLDALEQQEETITKFSDYISKMKE) is targeting to endoplasmic reticulum membrane.

The protein belongs to the PRA1 family. As to quaternary structure, homodimer. Heterodimer with ARL6IP1. Forms multimers. Interacts with ARL6. Interacts with prenylated RAB1A and RAB3A. Interacts with SLC1A1/EAAC1. Interacts with RTN2 (via first transmembrane domain). Does not interact with VAMP1, VAMP2 or VAMP3.

The protein resides in the endoplasmic reticulum membrane. It is found in the cell membrane. It localises to the cytoplasm. Its subcellular location is the cytoskeleton. Its function is as follows. Regulates intracellular concentrations of taurine and glutamate. Negatively modulates SLC1A1/EAAC1 glutamate transport activity by decreasing its affinity for glutamate in a PKC activity-dependent manner. Plays a role in the retention of SLC1A1/EAAC1 in the endoplasmic reticulum. This chain is PRA1 family protein 3 (ARL6IP5), found in Bos taurus (Bovine).